The chain runs to 660 residues: DNA topoisomerase I, plasmid (660 aa).

The 110-residue stretch at 1–110 (MKLMIIESPG…LRVTFNEITA (110 aa)) folds into the Toprim domain. Mg(2+) contacts are provided by E7 and D79. Positions 124 to 550 (DVKRVAAQEA…KVHDQLNMEL (427 aa)) constitute a Topo IA-type catalytic domain. Residues 158–163 (SAGRVQ) form an interaction with DNA region. The O-(5'-phospho-DNA)-tyrosine intermediate role is filled by Y287. C4-type zinc fingers lie at residues 563 to 589 (CQEC…YPDC) and 613 to 643 (CVKC…KEGC).

This sequence belongs to the type IA topoisomerase family. Monomer. Mg(2+) is required as a cofactor.

It catalyses the reaction ATP-independent breakage of single-stranded DNA, followed by passage and rejoining.. Functionally, releases the supercoiling and torsional tension of DNA, which is introduced during the DNA replication and transcription, by transiently cleaving and rejoining one strand of the DNA duplex. Introduces a single-strand break via transesterification at a target site in duplex DNA. The scissile phosphodiester is attacked by the catalytic tyrosine of the enzyme, resulting in the formation of a DNA-(5'-phosphotyrosyl)-enzyme intermediate and the expulsion of a 3'-OH DNA strand. The free DNA strand then undergoes passage around the unbroken strand, thus removing DNA supercoils. Finally, in the religation step, the DNA 3'-OH attacks the covalent intermediate to expel the active-site tyrosine and restore the DNA phosphodiester backbone. This is DNA topoisomerase I, plasmid from Xylella fastidiosa (strain 9a5c).